The chain runs to 529 residues: Glucose-6-phosphate isomerase (529 aa).

Glu323 acts as the Proton donor in catalysis. Active-site residues include His352 and Lys456.

Belongs to the GPI family.

Its subcellular location is the cytoplasm. The enzyme catalyses alpha-D-glucose 6-phosphate = beta-D-fructose 6-phosphate. Its pathway is carbohydrate biosynthesis; gluconeogenesis. It functions in the pathway carbohydrate degradation; glycolysis; D-glyceraldehyde 3-phosphate and glycerone phosphate from D-glucose: step 2/4. Functionally, catalyzes the reversible isomerization of glucose-6-phosphate to fructose-6-phosphate. The chain is Glucose-6-phosphate isomerase from Geobacter sulfurreducens (strain ATCC 51573 / DSM 12127 / PCA).